A 290-amino-acid chain; its full sequence is Type II secretion system protein C (290 aa).

Topologically, residues 1-28 (MTLPFRNDLLSSLLARCKTVPLSRFSQP) are cytoplasmic. A helical membrane pass occupies residues 29–46 (LFWLLLLLLAHQCAGLTW). Residues 47 to 290 (RLLDLGSQQA…LYDVYVGLSE (244 aa)) are Periplasmic-facing.

The protein belongs to the GSP C family.

Its subcellular location is the cell inner membrane. Functionally, involved in a type II secretion system (T2SS, formerly general secretion pathway, GSP) for the export of proteins. This Aeromonas hydrophila protein is Type II secretion system protein C (exeC).